The following is a 434-amino-acid chain: Nicotinate phosphoribosyltransferase (434 aa).

Position 242 is a phosphohistidine; by autocatalysis (His242).

Belongs to the NAPRTase family. Post-translationally, transiently phosphorylated on a His residue during the reaction cycle. Phosphorylation strongly increases the affinity for substrates and increases the rate of nicotinate D-ribonucleotide production. Dephosphorylation regenerates the low-affinity form of the enzyme, leading to product release.

It catalyses the reaction nicotinate + 5-phospho-alpha-D-ribose 1-diphosphate + ATP + H2O = nicotinate beta-D-ribonucleotide + ADP + phosphate + diphosphate. It functions in the pathway cofactor biosynthesis; NAD(+) biosynthesis; nicotinate D-ribonucleotide from nicotinate: step 1/1. Catalyzes the synthesis of beta-nicotinate D-ribonucleotide from nicotinate and 5-phospho-D-ribose 1-phosphate at the expense of ATP. The chain is Nicotinate phosphoribosyltransferase from Rhizobium etli (strain ATCC 51251 / DSM 11541 / JCM 21823 / NBRC 15573 / CFN 42).